The sequence spans 65 residues: DNA gyrase inhibitor YacG (65 aa).

Residues C8, C11, C27, and C31 each coordinate Zn(2+). The segment at 43 to 65 is disordered; it reads SYRIPDTGKDSEKQENDPSGSEK. Over residues 48–65 the composition is skewed to basic and acidic residues; the sequence is DTGKDSEKQENDPSGSEK.

The protein belongs to the DNA gyrase inhibitor YacG family. Interacts with GyrB. The cofactor is Zn(2+).

In terms of biological role, inhibits all the catalytic activities of DNA gyrase by preventing its interaction with DNA. Acts by binding directly to the C-terminal domain of GyrB, which probably disrupts DNA binding by the gyrase. This chain is DNA gyrase inhibitor YacG, found in Nitrosospira multiformis (strain ATCC 25196 / NCIMB 11849 / C 71).